A 375-amino-acid polypeptide reads, in one-letter code: Putative actin-26 (375 aa).

This sequence belongs to the actin family.

It is found in the cytoplasm. The protein localises to the cytoskeleton. The catalysed reaction is ATP + H2O = ADP + phosphate + H(+). Actins are highly conserved proteins that are involved in various types of cell motility and are ubiquitously expressed in all eukaryotic cells. Multiple isoforms are involved in various cellular functions such as cytoskeleton structure, cell mobility, chromosome movement and muscle contraction. This is Putative actin-26 (act26) from Dictyostelium discoideum (Social amoeba).